A 150-amino-acid polypeptide reads, in one-letter code: Probable antibacterial peptide (150 aa).

The N-terminal stretch at 1 to 19 (MHIARFCLLSSMAVLALSA) is a signal peptide.

Its subcellular location is the secreted. Functionally, has antibacterial activity in vitro. The protein is Probable antibacterial peptide of Riptortus clavatus (Bean bug).